The primary structure comprises 336 residues: UDP-N-acetylenolpyruvoylglucosamine reductase (336 aa).

The 172-residue stretch at 17–188 (GFDVRARYAS…TAVTLRLSRD (172 aa)) folds into the FAD-binding PCMH-type domain. Arg-164 is a catalytic residue. Residue Ser-236 is the Proton donor of the active site. Glu-332 is a catalytic residue.

This sequence belongs to the MurB family. FAD is required as a cofactor.

Its subcellular location is the cytoplasm. It catalyses the reaction UDP-N-acetyl-alpha-D-muramate + NADP(+) = UDP-N-acetyl-3-O-(1-carboxyvinyl)-alpha-D-glucosamine + NADPH + H(+). It participates in cell wall biogenesis; peptidoglycan biosynthesis. Its function is as follows. Cell wall formation. This Cupriavidus pinatubonensis (strain JMP 134 / LMG 1197) (Cupriavidus necator (strain JMP 134)) protein is UDP-N-acetylenolpyruvoylglucosamine reductase.